The following is a 596-amino-acid chain: Elongation factor 4 (596 aa).

One can recognise a tr-type G domain in the interval 2 to 184 (KHIRNFSIIA…VIVAQIPPPE (183 aa)). GTP is bound by residues 14-19 (DHGKST) and 131-134 (NKID).

The protein belongs to the TRAFAC class translation factor GTPase superfamily. Classic translation factor GTPase family. LepA subfamily.

The protein localises to the cell inner membrane. It catalyses the reaction GTP + H2O = GDP + phosphate + H(+). Functionally, required for accurate and efficient protein synthesis under certain stress conditions. May act as a fidelity factor of the translation reaction, by catalyzing a one-codon backward translocation of tRNAs on improperly translocated ribosomes. Back-translocation proceeds from a post-translocation (POST) complex to a pre-translocation (PRE) complex, thus giving elongation factor G a second chance to translocate the tRNAs correctly. Binds to ribosomes in a GTP-dependent manner. The sequence is that of Elongation factor 4 from Shewanella halifaxensis (strain HAW-EB4).